We begin with the raw amino-acid sequence, 195 residues long: dTTP/UTP pyrophosphatase (195 aa).

Asp76 (proton acceptor) is an active-site residue.

Belongs to the Maf family. YhdE subfamily. The cofactor is a divalent metal cation.

The protein resides in the cytoplasm. It catalyses the reaction dTTP + H2O = dTMP + diphosphate + H(+). The enzyme catalyses UTP + H2O = UMP + diphosphate + H(+). Nucleoside triphosphate pyrophosphatase that hydrolyzes dTTP and UTP. May have a dual role in cell division arrest and in preventing the incorporation of modified nucleotides into cellular nucleic acids. In Shewanella frigidimarina (strain NCIMB 400), this protein is dTTP/UTP pyrophosphatase.